The primary structure comprises 153 residues: Myoglobin (153 aa).

One can recognise a Globin domain in the interval 2–147; the sequence is GLNDQEWQQV…FRNDMASKYK (146 aa). Histidine 65 contributes to the nitrite binding site. Histidine 65 serves as a coordination point for O2. Residue histidine 93 participates in heme b binding.

This sequence belongs to the globin family. As to quaternary structure, monomeric.

It localises to the cytoplasm. The protein localises to the sarcoplasm. It catalyses the reaction Fe(III)-heme b-[protein] + nitric oxide + H2O = Fe(II)-heme b-[protein] + nitrite + 2 H(+). The catalysed reaction is H2O2 + AH2 = A + 2 H2O. Monomeric heme protein which primary function is to store oxygen and facilitate its diffusion within muscle tissues. Reversibly binds oxygen through a pentacoordinated heme iron and enables its timely and efficient release as needed during periods of heightened demand. Depending on the oxidative conditions of tissues and cells, and in addition to its ability to bind oxygen, it also has a nitrite reductase activity whereby it regulates the production of bioactive nitric oxide. Under stress conditions, like hypoxia and anoxia, it also protects cells against reactive oxygen species thanks to its pseudoperoxidase activity. This is Myoglobin (MB) from Aptenodytes forsteri (Emperor penguin).